The following is a 187-amino-acid chain: Dihydrofolate reductase (187 aa).

The 182-residue stretch at 4-185 (PLNCIVAVSQ…IKYKFEVYEK (182 aa)) folds into the DHFR domain. The tract at residues 8–37 (IVAVSQNMGIGKNGDFPWPMLRNEFKYFQR) is involved in methotrexate binding. Residues A10 and 16–22 (GIGKNGD) each bind NADP(+). 31–36 (EFKYFQ) lines the substrate pocket. Position 33 is an N6-acetyllysine; alternate (K33). At K33 the chain carries N6-succinyllysine; alternate. 55–57 (RKT) lines the NADP(+) pocket. The segment at 60–70 (SIPEKNRPLKD) is involved in methotrexate binding. Residue R71 participates in substrate binding. Residues 77–79 (SRE) and 117–124 (GGSSVYKE) each bind NADP(+). Residue T137 participates in methotrexate binding.

This sequence belongs to the dihydrofolate reductase family. Homodimer.

It is found in the mitochondrion. Its subcellular location is the cytoplasm. The enzyme catalyses (6S)-5,6,7,8-tetrahydrofolate + NADP(+) = 7,8-dihydrofolate + NADPH + H(+). It participates in cofactor biosynthesis; tetrahydrofolate biosynthesis; 5,6,7,8-tetrahydrofolate from 7,8-dihydrofolate: step 1/1. Its function is as follows. Key enzyme in folate metabolism. Contributes to the de novo mitochondrial thymidylate biosynthesis pathway. Catalyzes an essential reaction for de novo glycine and purine synthesis, and for DNA precursor synthesis. Binds its own mRNA. The chain is Dihydrofolate reductase (DHFR) from Mesocricetus auratus (Golden hamster).